The chain runs to 101 residues: Small ribosomal subunit protein uS14 (101 aa).

The protein belongs to the universal ribosomal protein uS14 family. In terms of assembly, part of the 30S ribosomal subunit. Contacts proteins S3 and S10.

Its function is as follows. Binds 16S rRNA, required for the assembly of 30S particles and may also be responsible for determining the conformation of the 16S rRNA at the A site. This Rhizobium meliloti (strain 1021) (Ensifer meliloti) protein is Small ribosomal subunit protein uS14.